A 108-amino-acid chain; its full sequence is UPF0145 protein LACR_1006 (108 aa).

Belongs to the UPF0145 family.

The polypeptide is UPF0145 protein LACR_1006 (Lactococcus lactis subsp. cremoris (strain SK11)).